The chain runs to 376 residues: N-acetyldiaminopimelate deacetylase (376 aa).

Asp-69 is a catalytic residue. The Proton acceptor role is filled by Glu-128.

It belongs to the peptidase M20A family. N-acetyldiaminopimelate deacetylase subfamily.

It carries out the reaction N-acetyl-(2S,6S)-2,6-diaminopimelate + H2O = (2S,6S)-2,6-diaminopimelate + acetate. It functions in the pathway amino-acid biosynthesis; L-lysine biosynthesis via DAP pathway; LL-2,6-diaminopimelate from (S)-tetrahydrodipicolinate (acetylase route): step 3/3. Catalyzes the conversion of N-acetyl-diaminopimelate to diaminopimelate and acetate. The chain is N-acetyldiaminopimelate deacetylase from Streptococcus pneumoniae (strain CGSP14).